The sequence spans 895 residues: Dystroglycan 1 (895 aa).

A signal peptide spans methionine 1–serine 29. The tract at residues histidine 30–proline 408 is required for laminin recognition. The tract at residues serine 49 to threonine 71 is O-glycosylated at one site. A glycan (N-linked (GlcNAc...) asparagine) is linked at asparagine 141. Residues cysteine 182 and cysteine 264 are joined by a disulfide bond. Residues alanine 316 to serine 485 form a mucin-like domain region. Threonine 317, threonine 319, and threonine 379 each carry an O-linked (Man6P...) threonine glycan. The disordered stretch occupies residues threonine 381–lysine 500. A compositionally biased stretch (polar residues) spans alanine 393–proline 403. The span at proline 413–arginine 447 shows a compositional bias: low complexity. The segment at threonine 463–serine 485 is O-glycosylated at seven sites with GalNAc. One can recognise a Peptidase S72 domain in the interval lysine 603 to serine 712. Asparagine 641, asparagine 649, and asparagine 661 each carry an N-linked (GlcNAc...) asparagine glycan. The Extracellular portion of the chain corresponds to serine 654–valine 749. Cysteine 669 and cysteine 713 are disulfide-bonded. Residues proline 724–aspartate 747 are disordered. Positions valine 736 to aspartate 747 are enriched in basic and acidic residues. A helical transmembrane segment spans residues tyrosine 750–tyrosine 775. Positions arginine 776–lysine 782 match the Nuclear localization signal motif. At arginine 776–proline 895 the chain is on the cytoplasmic side. Threonine 790 is subject to Phosphothreonine. Positions leucine 819–proline 895 are required for interaction with CAV3. Residues lysine 823–proline 895 are disordered. Residues proline 832–threonine 846 are compositionally biased toward polar residues. Over residues serine 859–threonine 870 the composition is skewed to pro residues. Residues proline 880–proline 895 form a required for binding DMD and UTRN region. Positions proline 889–tyrosine 892 match the PPXY motif motif. Phosphotyrosine; by SRC is present on tyrosine 892.

Monomer. Heterodimer of alpha- and beta-dystroglycan subunits which are the central components of the dystrophin-glycoprotein complex. This complex then can form a dystrophin-associated glycoprotein complex (DGC) which is composed of three subcomplexes: a cytoplasmic complex comprised of DMD (or UTRN), DTNA and a number of syntrophins, such as SNTB1, SNTB2, SNTG1 and SNTG2, the transmembrane dystroglycan complex, and the sarcoglycan-sarcospan complex. Interacts (via the N-terminal of alphaDAG1) with LARGE1; the interaction enhances laminin binding. Interacts with SGCD. Interacts with AGR2 and AGR3. Interacts (betaDAG1) with DMD; the interaction is inhibited by phosphorylation on the PPXY motif. Interacts (betaDAG1, via its PPXY motif) with UTRN (via its WWW and ZZ domains); the interaction is inhibited by phosphorylation on the PPXY motif. Interacts (betaDAG1, via its phosphorylated PPXY motif) with the SH2 domain-containing proteins, FYN, CSK, NCK and SHC. Interacts (betaDAG1) with CAV3 (via a central WW-like domain); the interaction disrupts the binding of DMD. BetaDAG1 directly interacts with ANK3, but not with ANK2; this interaction does not interfere with DMD-binding and is required for retention at costameres. Identified in a dystroglycan complex that contains at least PRX, DRP2, UTRN, DMD and DAG1. Interacts with POMGNT1. BetaDAG1 interacts with CD93. O-glycosylated. POMGNT1 catalyzes the initial addition of N-acetylglucosamine, giving rise to the GlcNAc(beta1-2)Man(alpha1-)O-Ser/Thr moiety and thus providing the necessary basis for the addition of further carbohydrate moieties. Heavily O-glycosylated comprising of up to two thirds of its mass and the carbohydrate composition differs depending on tissue type. Mucin-type O-glycosylation is important for ligand binding activity. O-mannosylation is found in high abundance in both brain and muscle where the most abundant glycan is Sia-alpha-2-3-Gal-beta-1-4-Glc-NAc-beta-1-2-Man. In muscle, glycosylation on Thr-317, Thr-319 and Thr-379 by a phosphorylated O-mannosyl glycan with the structure 2-(N-acetylamido)-2-deoxygalactosyl-beta-1,3-2-(N-acetylamido)-2-deoxyglucosyl-beta-1,4-6-phosphomannose is mediated by like-acetylglucosaminyltransferase (LARGE1) protein amd is required for laminin binding. O-glycosylated in the N-terminal region with a core 1 or possibly core 8 glycan. The brain form displays a unique glycosylation pattern which is absent in other tissues; this form shows enhanced binding to laminin LAMA5 compared to the skeletal muscle form. In terms of processing, N-glycosylated. Post-translationally, autolytic cleavage produces the alpha and beta subunits. In cutaneous cells, as well as in certain pathological conditions, shedding of beta-dystroglycan can occur releasing a peptide of about 30 kDa. SRC-mediated phosphorylation of the PPXY motif of the beta subunit recruits SH2 domain-containing proteins, but inhibits binding to WWW domain-containing proteins, DMD and UTRN. This phosphorylation also inhibits nuclear entry. Expressed in brain (at protein level). Expressed in the myelin sheath of peripheral nerves.

The protein localises to the secreted. It localises to the extracellular space. The protein resides in the cell membrane. It is found in the cytoplasm. Its subcellular location is the cytoskeleton. The protein localises to the nucleus. It localises to the nucleoplasm. The protein resides in the sarcolemma. It is found in the postsynaptic cell membrane. Its function is as follows. The dystroglycan complex is involved in a number of processes including laminin and basement membrane assembly, sarcolemmal stability, cell survival, peripheral nerve myelination, nodal structure, cell migration, and epithelial polarization. Extracellular peripheral glycoprotein that acts as a receptor for extracellular matrix proteins containing laminin-G domains. Receptor for laminin-2 (LAMA2) and agrin in peripheral nerve Schwann cells. Also acts as a receptor for laminin LAMA5. Functionally, transmembrane protein that plays important roles in connecting the extracellular matrix to the cytoskeleton. Acts as a cell adhesion receptor in both muscle and non-muscle tissues. Receptor for both DMD and UTRN and, through these interactions, scaffolds axin to the cytoskeleton. Also functions in cell adhesion-mediated signaling and implicated in cell polarity. This is Dystroglycan 1 from Bos taurus (Bovine).